We begin with the raw amino-acid sequence, 156 residues long: Endoribonuclease YbeY (156 aa).

His122, His126, and His132 together coordinate Zn(2+).

It belongs to the endoribonuclease YbeY family. The cofactor is Zn(2+).

It is found in the cytoplasm. Functionally, single strand-specific metallo-endoribonuclease involved in late-stage 70S ribosome quality control and in maturation of the 3' terminus of the 16S rRNA. This is Endoribonuclease YbeY from Geobacillus thermodenitrificans (strain NG80-2).